Consider the following 288-residue polypeptide: ATP synthase gamma chain (288 aa).

This sequence belongs to the ATPase gamma chain family. As to quaternary structure, F-type ATPases have 2 components, CF(1) - the catalytic core - and CF(0) - the membrane proton channel. CF(1) has five subunits: alpha(3), beta(3), gamma(1), delta(1), epsilon(1). CF(0) has three main subunits: a, b and c.

It localises to the cell membrane. In terms of biological role, produces ATP from ADP in the presence of a proton gradient across the membrane. The gamma chain is believed to be important in regulating ATPase activity and the flow of protons through the CF(0) complex. In Bacillus pumilus (strain SAFR-032), this protein is ATP synthase gamma chain.